The following is a 141-amino-acid chain: Vesicle-associated membrane protein 4 (141 aa).

Residues 1-51 (MPPKFKRHLNDDDVTGSVKSERRNLLEDDSDEEEDFFLRGPSGPRFGPRND) are disordered. Residues 1-115 (MPPKFKRHLN…RRQMWWRGCK (115 aa)) are Cytoplasmic-facing. Ser17 and Ser30 each carry phosphoserine. The v-SNARE coiled-coil homology domain occupies 52 to 112 (KIKHVQNQVD…KQLRRQMWWR (61 aa)). Residues 116–136 (IKAIMALVAVILLLVIIILIV) traverse the membrane as a helical; Anchor for type IV membrane protein segment. Topologically, residues 137–141 (VKYRT) are vesicular.

This sequence belongs to the synaptobrevin family. As to quaternary structure, identified in a complex containing STX6, STX12, VAMP4 and VTI1A. Interacts with BAIAP3; this interaction is increased in the presence of calcium.

It localises to the golgi apparatus. Its subcellular location is the trans-Golgi network membrane. Involved in the pathway that functions to remove an inhibitor (probably synaptotagmin-4) of calcium-triggered exocytosis during the maturation of secretory granules. May be a marker for this sorting pathway that is critical for remodeling the secretory response of granule. The chain is Vesicle-associated membrane protein 4 (VAMP4) from Bos taurus (Bovine).